Reading from the N-terminus, the 118-residue chain is Immunoglobulin heavy variable 4-30-2 (118 aa).

The signal sequence occupies residues 1 to 19; the sequence is MKHLWFFLLLVAAPRWVLS. The framework-1 stretch occupies residues 20–44; it reads QLQLQESGSGLVKPSQTLSLTCAVS. In terms of domain architecture, Ig-like spans 20-118; the sequence is QLQLQESGSG…ADTAVYYCAR (99 aa). Cysteine 41 and cysteine 116 are disulfide-bonded. The complementarity-determining-1 stretch occupies residues 45–54; the sequence is GGSISSGGYS. The framework-2 stretch occupies residues 55–71; the sequence is WSWIRQPPGKGLEWIGY. The segment at 72–78 is complementarity-determining-2; that stretch reads IYHSGST. A framework-3 region spans residues 79-116; that stretch reads YYNPSLKSRVTISVDRSKNQFSLKLSSVTAADTAVYYC. The interval 117-118 is complementarity-determining-3; sequence AR.

As to quaternary structure, immunoglobulins are composed of two identical heavy chains and two identical light chains; disulfide-linked.

Its subcellular location is the secreted. It is found in the cell membrane. Its function is as follows. V region of the variable domain of immunoglobulin heavy chains that participates in the antigen recognition. Immunoglobulins, also known as antibodies, are membrane-bound or secreted glycoproteins produced by B lymphocytes. In the recognition phase of humoral immunity, the membrane-bound immunoglobulins serve as receptors which, upon binding of a specific antigen, trigger the clonal expansion and differentiation of B lymphocytes into immunoglobulins-secreting plasma cells. Secreted immunoglobulins mediate the effector phase of humoral immunity, which results in the elimination of bound antigens. The antigen binding site is formed by the variable domain of one heavy chain, together with that of its associated light chain. Thus, each immunoglobulin has two antigen binding sites with remarkable affinity for a particular antigen. The variable domains are assembled by a process called V-(D)-J rearrangement and can then be subjected to somatic hypermutations which, after exposure to antigen and selection, allow affinity maturation for a particular antigen. In Homo sapiens (Human), this protein is Immunoglobulin heavy variable 4-30-2.